A 177-amino-acid polypeptide reads, in one-letter code: Large ribosomal subunit protein bL9 (177 aa).

The interval 151-177 is disordered; sequence EDEEIAEAAPVAEAQAEADGHSTEETA. Low complexity predominate over residues 157–167; it reads EAAPVAEAQAE. The span at 168 to 177 shows a compositional bias: basic and acidic residues; sequence ADGHSTEETA.

Belongs to the bacterial ribosomal protein bL9 family.

In terms of biological role, binds to the 23S rRNA. The sequence is that of Large ribosomal subunit protein bL9 from Solidesulfovibrio magneticus (strain ATCC 700980 / DSM 13731 / RS-1) (Desulfovibrio magneticus).